A 541-amino-acid chain; its full sequence is 2-hydroxyacylsphingosine 1-beta-galactosyltransferase (541 aa).

An N-terminal signal peptide occupies residues 1–20; sequence MKSYTPYFMLLWSAVGIARA. N-linked (GlcNAc...) asparagine glycosylation is found at asparagine 78, asparagine 333, and asparagine 442. Residues 472–492 traverse the membrane as a helical segment; sequence YFLLDIAFVLLLGAVALYFIV.

This sequence belongs to the UDP-glycosyltransferase family. In terms of tissue distribution, brain, restricted to the oligodendrocyte-containing cell layers of cerebrum and cerebellum.

Its subcellular location is the membrane. The protein localises to the endoplasmic reticulum. It catalyses the reaction an N-acylsphing-4-enine + UDP-alpha-D-galactose = a beta-D-galactosyl-(1&lt;-&gt;1')-N-acylsphing-4-enine + UDP + H(+). The enzyme catalyses N-(2-hydroxy-hexanoyl)-sphing-4-enine + UDP-alpha-D-galactose = N-(2-hydroxy-hexanoyl)-beta-D-galactosyl-sphing-4-enine + UDP + H(+). The catalysed reaction is N-(2-hydroxy-hexanoyl)-sphinganine + UDP-alpha-D-galactose = N-(2-hydroxyhexanoyl)-beta-D-galactosylsphinganine + UDP + H(+). It carries out the reaction an N-acyl-sphingoid base + UDP-alpha-D-galactose = a D-galactosylceramide + UDP + H(+). Its pathway is sphingolipid metabolism; galactosylceramide biosynthesis. In terms of biological role, catalyzes the transfer of galactose to ceramide, a key enzymatic step in the biosynthesis of galactocerebrosides, which are abundant sphingolipids of the myelin membrane of the central nervous system and peripheral nervous system. Galactosylates both hydroxy- and non-hydroxy fatty acid-containing ceramides and diglycerides. This Rattus norvegicus (Rat) protein is 2-hydroxyacylsphingosine 1-beta-galactosyltransferase.